A 309-amino-acid polypeptide reads, in one-letter code: MNQPSSLAADLRGAWHAQAQSHPLITLGLAASAAGVVLLLVAGIVNALTGENRVHVGYAVLGGAAGFAATALGALMALGLRAISARTQDAMLGFAAGMMLAASAFSLILPGLDAAGTIVGPGPAAAAVVALGLGLGVLLMLGLDYFTPHEHERTGHQGPEAARVNRVWLFVLTIILHNLPEGMAIGVSFATGDLRIGLPLTSAIAIQDVPEGLAVALALRAVGLPIGRAVLVAVASGLMEPLGALVGVGISSGFALAYPISMGLAAGAMIFVVSHEVIPETHRNGHETTATVGLMAGFALMMFLDTALG.

Residues 1 to 22 are Periplasmic-facing; the sequence is MNQPSSLAADLRGAWHAQAQSH. The chain crosses the membrane as a helical span at residues 23–50; the sequence is PLITLGLAASAAGVVLLLVAGIVNALTG. The Extracellular portion of the chain corresponds to 51-55; it reads ENRVH. A helical membrane pass occupies residues 56-81; the sequence is VGYAVLGGAAGFAATALGALMALGLR. Residues 82 to 83 lie on the Periplasmic side of the membrane; it reads AI. A helical transmembrane segment spans residues 84–119; it reads SARTQDAMLGFAAGMMLAASAFSLILPGLDAAGTIV. Aspartate 89 is a Zn(2+) binding site. Methionine 99 is a binding site for Cd(2+). The Extracellular segment spans residues 120 to 121; it reads GP. A helical membrane pass occupies residues 122-145; the sequence is GPAAAAVVALGLGLGVLLMLGLDY. Aspartate 144 is a Zn(2+) binding site. Position 144 (aspartate 144) interacts with Cd(2+). At 146–165 the chain is on the periplasmic side; sequence FTPHEHERTGHQGPEAARVN. The chain crosses the membrane as a helical span at residues 166 to 190; it reads RVWLFVLTIILHNLPEGMAIGVSFA. Histidine 177 contacts Zn(2+). Cd(2+) is bound by residues histidine 177, asparagine 178, and glutamate 181. Glutamate 181 lines the Zn(2+) pocket. Residues 191-192 are Extracellular-facing; it reads TG. The helical transmembrane segment at 193–222 threads the bilayer; sequence DLRIGLPLTSAIAIQDVPEGLAVALALRAV. Residue glutamine 207 participates in Zn(2+) binding. Residues glutamine 207, aspartate 208, and glutamate 211 each coordinate Cd(2+). Glutamate 211 lines the Zn(2+) pocket. The Periplasmic segment spans residues 223–224; the sequence is GL. A helical membrane pass occupies residues 225–251; that stretch reads PIGRAVLVAVASGLMEPLGALVGVGIS. Glutamate 240 lines the Cd(2+) pocket. Over 252 to 255 the chain is Extracellular; the sequence is SGFA. The helical transmembrane segment at 256–275 threads the bilayer; it reads LAYPISMGLAAGAMIFVVSH. 3 residues coordinate Zn(2+): histidine 275, glutamate 276, and histidine 286. Histidine 275 is a Cd(2+) binding site. The Periplasmic segment spans residues 276–287; the sequence is EVIPETHRNGHE. Residues 288–308 traverse the membrane as a helical segment; the sequence is TTATVGLMAGFALMMFLDTAL. A topological domain (extracellular) is located at residue glycine 309.

It belongs to the ZIP transporter (TC 2.A.5) family. Homodimer. Also exists as a monomer.

The protein localises to the cell inner membrane. It catalyses the reaction Zn(2+)(in) = Zn(2+)(out). It carries out the reaction Cd(2+)(in) = Cd(2+)(out). Its function is as follows. Selective electrodiffusional channel that mediates the uptake of Zn(2+). Exploits in vivo zinc concentration gradients (maintained by cellular zinc homeostasis) to passively move zinc ions into the cytoplasm. ZIPB-mediated zinc flux is dependent upon pH, but independent of the proton motive force. Is also able to import Cd(2+), but is not permeable to Co(2+), Cu(2+), Fe(2+), Mn(2+) and Ni(2+). The polypeptide is Zinc transporter ZIPB (Bordetella bronchiseptica (strain ATCC BAA-588 / NCTC 13252 / RB50) (Alcaligenes bronchisepticus)).